Consider the following 239-residue polypeptide: Uridylate kinase (239 aa).

Lysine 13 to glycine 16 lines the ATP pocket. Glycine 55 is a UMP binding site. Glycine 56 and arginine 60 together coordinate ATP. UMP contacts are provided by residues aspartate 75 and threonine 136–threonine 143. 3 residues coordinate ATP: threonine 163, tyrosine 169, and aspartate 172.

This sequence belongs to the UMP kinase family. As to quaternary structure, homohexamer.

It is found in the cytoplasm. It carries out the reaction UMP + ATP = UDP + ADP. Its pathway is pyrimidine metabolism; CTP biosynthesis via de novo pathway; UDP from UMP (UMPK route): step 1/1. With respect to regulation, inhibited by UTP. In terms of biological role, catalyzes the reversible phosphorylation of UMP to UDP. In Chromobacterium violaceum (strain ATCC 12472 / DSM 30191 / JCM 1249 / CCUG 213 / NBRC 12614 / NCIMB 9131 / NCTC 9757 / MK), this protein is Uridylate kinase.